Here is a 329-residue protein sequence, read N- to C-terminus: Phenylalanine--tRNA ligase alpha subunit (329 aa).

Glutamate 254 provides a ligand contact to Mg(2+).

This sequence belongs to the class-II aminoacyl-tRNA synthetase family. Phe-tRNA synthetase alpha subunit type 1 subfamily. As to quaternary structure, tetramer of two alpha and two beta subunits. Mg(2+) is required as a cofactor.

It localises to the cytoplasm. It carries out the reaction tRNA(Phe) + L-phenylalanine + ATP = L-phenylalanyl-tRNA(Phe) + AMP + diphosphate + H(+). This is Phenylalanine--tRNA ligase alpha subunit from Mannheimia succiniciproducens (strain KCTC 0769BP / MBEL55E).